The primary structure comprises 134 residues: Holo-[acyl-carrier-protein] synthase (134 aa).

2 residues coordinate Mg(2+): aspartate 8 and glutamate 57.

This sequence belongs to the P-Pant transferase superfamily. AcpS family. Requires Mg(2+) as cofactor.

The protein localises to the cytoplasm. It catalyses the reaction apo-[ACP] + CoA = holo-[ACP] + adenosine 3',5'-bisphosphate + H(+). Functionally, transfers the 4'-phosphopantetheine moiety from coenzyme A to a Ser of acyl-carrier-protein. The chain is Holo-[acyl-carrier-protein] synthase from Rhizobium johnstonii (strain DSM 114642 / LMG 32736 / 3841) (Rhizobium leguminosarum bv. viciae).